Consider the following 427-residue polypeptide: MLNPYLLRNELHLTAKKLLKKGYKLNISKISSMEEKRKTLQIQTENLQFKHNALSNLFKENKNIKNKNELLRHQVIQSSKDLNASKIELNSLKEKIHHFSMCIPNIPSDDVPEGNTSINNKEIKYWGQKKKYDFEIQDHIELGKKFNELDWKSSAQMSGSRFVIMKGKIALLHRALSQFMLDLHTLKHGYIESYVPYLVHSEALYGTGQLPKFSDDLFHINLTDKKKYILIPTGEVPLTNLVYDQIIDEKDLPIMLTAHTPCFRSEASSYGRDTKGLIRLHQFDKVELVQIVKPEKSYEALEKLTNHAEKVLQLLNLPYRKMLLCTGDTGFAAVKTYDLEVWFPSEKKYREVSSCSNMSDFQARRIKARYRKKSEQKNFFVHTLNGSGLAIGRTLAAILENYQHSNGRIEIPKVLQKKYMQGLEFIN.

Residue 233–235 participates in L-serine binding; the sequence is TGE. 264–266 serves as a coordination point for ATP; sequence RSE. Glu-287 lines the L-serine pocket. Residue 351 to 354 coordinates ATP; sequence EVSS. Ser-387 contacts L-serine.

Belongs to the class-II aminoacyl-tRNA synthetase family. Type-1 seryl-tRNA synthetase subfamily. In terms of assembly, homodimer. The tRNA molecule binds across the dimer.

It localises to the cytoplasm. It catalyses the reaction tRNA(Ser) + L-serine + ATP = L-seryl-tRNA(Ser) + AMP + diphosphate + H(+). It carries out the reaction tRNA(Sec) + L-serine + ATP = L-seryl-tRNA(Sec) + AMP + diphosphate + H(+). The protein operates within aminoacyl-tRNA biosynthesis; selenocysteinyl-tRNA(Sec) biosynthesis; L-seryl-tRNA(Sec) from L-serine and tRNA(Sec): step 1/1. Its function is as follows. Catalyzes the attachment of serine to tRNA(Ser). Is also able to aminoacylate tRNA(Sec) with serine, to form the misacylated tRNA L-seryl-tRNA(Sec), which will be further converted into selenocysteinyl-tRNA(Sec). This Buchnera aphidicola subsp. Acyrthosiphon pisum (strain 5A) protein is Serine--tRNA ligase.